We begin with the raw amino-acid sequence, 795 residues long: Phenylalanine--tRNA ligase beta subunit (795 aa).

Positions 39 to 148 constitute a tRNA-binding domain; it reads AGSFNGVVVG…ADAPLGTDIR (110 aa). The B5 domain maps to 401-476; that stretch reads PKRATITLRR…RVYGYNNIPD (76 aa). Positions 454, 460, 463, and 464 each coordinate Mg(2+). One can recognise an FDX-ACB domain in the interval 701–794; that stretch reads SRFPANRRDI…LKERFQASLR (94 aa).

Belongs to the phenylalanyl-tRNA synthetase beta subunit family. Type 1 subfamily. In terms of assembly, tetramer of two alpha and two beta subunits. It depends on Mg(2+) as a cofactor.

The protein resides in the cytoplasm. The enzyme catalyses tRNA(Phe) + L-phenylalanine + ATP = L-phenylalanyl-tRNA(Phe) + AMP + diphosphate + H(+). This chain is Phenylalanine--tRNA ligase beta subunit, found in Salmonella choleraesuis (strain SC-B67).